Reading from the N-terminus, the 200-residue chain is Holliday junction branch migration complex subunit RuvA (200 aa).

The interval 1-63 (MYAYIKGTLT…EDAQLLYGFI (63 aa)) is domain I. Positions 64–142 (NQEEKDMFLS…INDVDSSQIL (79 aa)) are domain II. A flexible linker region spans residues 143-149 (NTDTQDH). A domain III region spans residues 150–200 (ANAPIIKEALLALEALGYSKRELTKVEKSLSKETFDSVDDAVKRGLQLLIA).

Belongs to the RuvA family. As to quaternary structure, homotetramer. Forms an RuvA(8)-RuvB(12)-Holliday junction (HJ) complex. HJ DNA is sandwiched between 2 RuvA tetramers; dsDNA enters through RuvA and exits via RuvB. An RuvB hexamer assembles on each DNA strand where it exits the tetramer. Each RuvB hexamer is contacted by two RuvA subunits (via domain III) on 2 adjacent RuvB subunits; this complex drives branch migration. In the full resolvosome a probable DNA-RuvA(4)-RuvB(12)-RuvC(2) complex forms which resolves the HJ.

It localises to the cytoplasm. Its function is as follows. The RuvA-RuvB-RuvC complex processes Holliday junction (HJ) DNA during genetic recombination and DNA repair, while the RuvA-RuvB complex plays an important role in the rescue of blocked DNA replication forks via replication fork reversal (RFR). RuvA specifically binds to HJ cruciform DNA, conferring on it an open structure. The RuvB hexamer acts as an ATP-dependent pump, pulling dsDNA into and through the RuvAB complex. HJ branch migration allows RuvC to scan DNA until it finds its consensus sequence, where it cleaves and resolves the cruciform DNA. This is Holliday junction branch migration complex subunit RuvA from Staphylococcus saprophyticus subsp. saprophyticus (strain ATCC 15305 / DSM 20229 / NCIMB 8711 / NCTC 7292 / S-41).